Here is a 159-residue protein sequence, read N- to C-terminus: Ribosomal RNA large subunit methyltransferase H (159 aa).

S-adenosyl-L-methionine is bound by residues Leu76, Gly108, and 127–132 (FSKMTF).

The protein belongs to the RNA methyltransferase RlmH family. In terms of assembly, homodimer.

It is found in the cytoplasm. It carries out the reaction pseudouridine(1915) in 23S rRNA + S-adenosyl-L-methionine = N(3)-methylpseudouridine(1915) in 23S rRNA + S-adenosyl-L-homocysteine + H(+). Its function is as follows. Specifically methylates the pseudouridine at position 1915 (m3Psi1915) in 23S rRNA. In Staphylococcus carnosus (strain TM300), this protein is Ribosomal RNA large subunit methyltransferase H.